The primary structure comprises 197 residues: Phosphoheptose isomerase (197 aa).

Residues M34–Q196 enclose the SIS domain. Position 49–51 (N49–G51) interacts with substrate. Residues H58 and E62 each coordinate Zn(2+). Residues E62, N91–D92, S117–S119, S122, and Q172 contribute to the substrate site. Q172 and H180 together coordinate Zn(2+).

This sequence belongs to the SIS family. GmhA subfamily. Homotetramer. Zn(2+) serves as cofactor.

The protein localises to the cytoplasm. The catalysed reaction is 2 D-sedoheptulose 7-phosphate = D-glycero-alpha-D-manno-heptose 7-phosphate + D-glycero-beta-D-manno-heptose 7-phosphate. It functions in the pathway carbohydrate biosynthesis; D-glycero-D-manno-heptose 7-phosphate biosynthesis; D-glycero-alpha-D-manno-heptose 7-phosphate and D-glycero-beta-D-manno-heptose 7-phosphate from sedoheptulose 7-phosphate: step 1/1. Its function is as follows. Catalyzes the isomerization of sedoheptulose 7-phosphate in D-glycero-D-manno-heptose 7-phosphate. The sequence is that of Phosphoheptose isomerase from Shewanella halifaxensis (strain HAW-EB4).